A 343-amino-acid chain; its full sequence is UDP-3-O-(3-hydroxymyristoyl)glucosamine N-acyltransferase (343 aa).

His-239 acts as the Proton acceptor in catalysis.

The protein belongs to the transferase hexapeptide repeat family. LpxD subfamily. As to quaternary structure, homotrimer.

The catalysed reaction is a UDP-3-O-[(3R)-3-hydroxyacyl]-alpha-D-glucosamine + a (3R)-hydroxyacyl-[ACP] = a UDP-2-N,3-O-bis[(3R)-3-hydroxyacyl]-alpha-D-glucosamine + holo-[ACP] + H(+). It carries out the reaction UDP-3-O-[(3R)-3-hydroxytetradecanoyl]-alpha-D-glucosamine + (3R)-hydroxytetradecanoyl-[ACP] = UDP-2-N,3-O-bis[(3R)-3-hydroxytetradecanoyl]-alpha-D-glucosamine + holo-[ACP] + H(+). Its pathway is glycolipid biosynthesis; lipid IV(A) biosynthesis; lipid IV(A) from (3R)-3-hydroxytetradecanoyl-[acyl-carrier-protein] and UDP-N-acetyl-alpha-D-glucosamine: step 3/6. In terms of biological role, catalyzes the N-acylation of UDP-3-O-(hydroxytetradecanoyl)glucosamine using 3-hydroxytetradecanoyl-ACP as the acyl donor. Is involved in the biosynthesis of lipid A, a phosphorylated glycolipid that anchors the lipopolysaccharide to the outer membrane of the cell. This chain is UDP-3-O-(3-hydroxymyristoyl)glucosamine N-acyltransferase, found in Blochmanniella pennsylvanica (strain BPEN).